The sequence spans 242 residues: Argininosuccinate synthase (242 aa).

Belongs to the argininosuccinate synthase family. Type 2 subfamily. As to quaternary structure, homotetramer.

It is found in the cytoplasm. It catalyses the reaction L-citrulline + L-aspartate + ATP = 2-(N(omega)-L-arginino)succinate + AMP + diphosphate + H(+). It functions in the pathway amino-acid biosynthesis; L-arginine biosynthesis; L-arginine from L-ornithine and carbamoyl phosphate: step 2/3. This is Argininosuccinate synthase (argG) from Dickeya chrysanthemi (Pectobacterium chrysanthemi).